Reading from the N-terminus, the 160-residue chain is Phosphopantetheine adenylyltransferase (160 aa).

Residue serine 9 participates in substrate binding. ATP contacts are provided by residues 9-10 (SF) and histidine 17. Substrate-binding residues include lysine 41, valine 73, and lysine 87. Residues 88–90 (GLR), glutamate 98, and 122–128 (YSFVSSS) each bind ATP.

It belongs to the bacterial CoaD family. As to quaternary structure, homohexamer. Requires Mg(2+) as cofactor.

It is found in the cytoplasm. The enzyme catalyses (R)-4'-phosphopantetheine + ATP + H(+) = 3'-dephospho-CoA + diphosphate. Its pathway is cofactor biosynthesis; coenzyme A biosynthesis; CoA from (R)-pantothenate: step 4/5. In terms of biological role, reversibly transfers an adenylyl group from ATP to 4'-phosphopantetheine, yielding dephospho-CoA (dPCoA) and pyrophosphate. The sequence is that of Phosphopantetheine adenylyltransferase from Mycobacterium avium (strain 104).